Reading from the N-terminus, the 311-residue chain is Energy-coupling factor transporter ATP-binding protein EcfA (311 aa).

Positions 2-237 (IELRDLSYSY…AELIRRASLR (236 aa)) constitute an ABC transporter domain. 35 to 42 (GPNGAGKS) is an ATP binding site.

It belongs to the ABC transporter superfamily. Energy-coupling factor EcfA family. As to quaternary structure, forms a stable energy-coupling factor (ECF) transporter complex composed of 2 membrane-embedded substrate-binding proteins (S component), 2 ATP-binding proteins (A component) and 2 transmembrane proteins (T component).

The protein localises to the cell membrane. ATP-binding (A) component of a common energy-coupling factor (ECF) ABC-transporter complex. Unlike classic ABC transporters this ECF transporter provides the energy necessary to transport a number of different substrates. The protein is Energy-coupling factor transporter ATP-binding protein EcfA of Methanothermobacter thermautotrophicus (strain ATCC 29096 / DSM 1053 / JCM 10044 / NBRC 100330 / Delta H) (Methanobacterium thermoautotrophicum).